A 281-amino-acid chain; its full sequence is MALKTFKPYTKSTRGTILVDRAGLWKGKPFKALVEPKNSMRGRNNNGHITSRNMSGGGHKKMYRLVDFYRKKIDMPGTVERIEYDPNRSCYIMLVKFDDGQHFYYLAPQKIKVGDKVENGSEKEIKVGNCMPLRDIPVGINIHNVELKPGAGGKIARSAGTSVTISGLDGNYSLIKMTSGEVRKIDSRCMATIGVLSNPDQKNIKIGKAGRSRWLGRRPHTRGVVMNPVDHPHGGGEGKTAGGRHPVSPTGQSAKGLKTRDNKSTDKFIVRRRNNRKDSKK.

Residues 215-281 are disordered; the sequence is LGRRPHTRGV…RRNNRKDSKK (67 aa). Positions 258–269 are enriched in basic and acidic residues; it reads KTRDNKSTDKFI. Residues 270–281 are compositionally biased toward basic residues; sequence VRRRNNRKDSKK.

The protein belongs to the universal ribosomal protein uL2 family. In terms of assembly, part of the 50S ribosomal subunit. Forms a bridge to the 30S subunit in the 70S ribosome.

In terms of biological role, one of the primary rRNA binding proteins. Required for association of the 30S and 50S subunits to form the 70S ribosome, for tRNA binding and peptide bond formation. It has been suggested to have peptidyltransferase activity; this is somewhat controversial. Makes several contacts with the 16S rRNA in the 70S ribosome. The polypeptide is Large ribosomal subunit protein uL2 (Pelagibacter ubique (strain HTCC1062)).